The following is a 109-amino-acid chain: Small ribosomal subunit protein uS17 (109 aa).

Belongs to the universal ribosomal protein uS17 family. As to quaternary structure, part of the 30S ribosomal subunit.

In terms of biological role, one of the primary rRNA binding proteins, it binds specifically to the 5'-end of 16S ribosomal RNA. This is Small ribosomal subunit protein uS17 from Methanococcoides burtonii (strain DSM 6242 / NBRC 107633 / OCM 468 / ACE-M).